Reading from the N-terminus, the 350-residue chain is MNMMIKAYKRKLDVANGRIDLSHGAGGRAMGQLIEGIFHKAFDNDWLRAGNDQSAFSVPGGRMVMTTDGYVVSPLFFPGGNIGTLAVHGTINDIAMAGAVPLYLSASFIIEEGFPLVDLERIADSMGAASREAGVPIITGDTKVVERGKADGVFISTAGIGMAPDGLDLRSDAARPGDAVIISGSIGDHGVAVMSKRENLEFDTDIVSDSAALHGLVADMVAAGGAHIRLMRDPTRGGIAATLNEIASQSRVGFRIDEEAIPMKPEVAAACEFLGLDPLNVANEGKLVAVVAPEGADAVLAAIHAHPLGAEAALIGHVVADDNYFVQMVTSFGGGRIVDWLSGEQLPRIC.

Position 350 is an S-carbamoylcysteine (Cys-350). Cys-350 bears the S-cyanocysteine mark.

This sequence belongs to the HypE family. Modified by HypF, which adds a carboxamido group to the thiolate of the C-terminal cysteine, yielding a protein-S-carboxamide. The carboxamido group is then dehydrated by HypE itself to yield a protein-thiocyanate.

The catalysed reaction is C-terminal S-carboxamide-L-cysteinyl-[HypE protein] + ATP = C-terminal S-cyanate-L-cysteinyl-[HypE protein] + ADP + phosphate + H(+). It participates in protein modification; [NiFe] hydrogenase maturation. Involved in the maturation of [NiFe] hydrogenases. Along with HypF, it catalyzes the synthesis of the CN ligands of the active site iron of [NiFe]-hydrogenases. HypE catalyzes the ATP-dependent dehydration of the carboxamido group attached to its C-terminal cysteine to a cyano group. This chain is Carbamoyl dehydratase HypE, found in Rhizobium leguminosarum bv. viciae.